We begin with the raw amino-acid sequence, 217 residues long: MSIGVLVFPGSNCDRDVQWATEGCLGMPTRRIWHEETDLSGLDAVVLPGGFSYGDYLRCGAIARFAPALQALLGFAAQGGRVLGICNGFQVLTELGLLPGALTRNRDLHFICEDAPLQVVSSRTPWLEHYGTDKALTLPIAHGEGRYQCSDDTLKQLQDADAIALRYQANPNGSVADIAGITNDSGNVLGLMPHPERACDPATGGTDGRVLLQGLLS.

Residues 2–217 form the Glutamine amidotransferase type-1 domain; that stretch reads SIGVLVFPGS…GRVLLQGLLS (216 aa). Cys-86 serves as the catalytic Nucleophile. Catalysis depends on residues His-194 and Glu-196.

As to quaternary structure, part of the FGAM synthase complex composed of 1 PurL, 1 PurQ and 2 PurS subunits.

The protein localises to the cytoplasm. The enzyme catalyses N(2)-formyl-N(1)-(5-phospho-beta-D-ribosyl)glycinamide + L-glutamine + ATP + H2O = 2-formamido-N(1)-(5-O-phospho-beta-D-ribosyl)acetamidine + L-glutamate + ADP + phosphate + H(+). The catalysed reaction is L-glutamine + H2O = L-glutamate + NH4(+). It participates in purine metabolism; IMP biosynthesis via de novo pathway; 5-amino-1-(5-phospho-D-ribosyl)imidazole from N(2)-formyl-N(1)-(5-phospho-D-ribosyl)glycinamide: step 1/2. In terms of biological role, part of the phosphoribosylformylglycinamidine synthase complex involved in the purines biosynthetic pathway. Catalyzes the ATP-dependent conversion of formylglycinamide ribonucleotide (FGAR) and glutamine to yield formylglycinamidine ribonucleotide (FGAM) and glutamate. The FGAM synthase complex is composed of three subunits. PurQ produces an ammonia molecule by converting glutamine to glutamate. PurL transfers the ammonia molecule to FGAR to form FGAM in an ATP-dependent manner. PurS interacts with PurQ and PurL and is thought to assist in the transfer of the ammonia molecule from PurQ to PurL. The polypeptide is Phosphoribosylformylglycinamidine synthase subunit PurQ (Parasynechococcus marenigrum (strain WH8102)).